A 427-amino-acid chain; its full sequence is Phosphoribosylamine--glycine ligase (427 aa).

Residues 109 to 313 (RNLMAEYKIE…LAEVVTGITE (205 aa)) enclose the ATP-grasp domain. ATP is bound at residue 136–191 (VRDHDGDLAVKPIGLTGGKGVRIMGEQVDRAGAIEYIREINGGVVLEERLTGEEFT). Residues Gln271, Glu283, and Asn285 each coordinate Mg(2+). Mn(2+)-binding residues include Gln271, Glu283, and Asn285.

Belongs to the GARS family. Mg(2+) is required as a cofactor. The cofactor is Mn(2+).

The catalysed reaction is 5-phospho-beta-D-ribosylamine + glycine + ATP = N(1)-(5-phospho-beta-D-ribosyl)glycinamide + ADP + phosphate + H(+). It participates in purine metabolism; IMP biosynthesis via de novo pathway; N(1)-(5-phospho-D-ribosyl)glycinamide from 5-phospho-alpha-D-ribose 1-diphosphate: step 2/2. The polypeptide is Phosphoribosylamine--glycine ligase (Methanoregula boonei (strain DSM 21154 / JCM 14090 / 6A8)).